The following is a 452-amino-acid chain: Bifunctional protein GlmU (452 aa).

Positions 1–226 (MSLHIIILAA…LHEVEGVNNR (226 aa)) are pyrophosphorylase. UDP-N-acetyl-alpha-D-glucosamine contacts are provided by residues 8-11 (LAAG), lysine 22, glutamine 73, 78-79 (GT), 100-102 (YGD), glycine 136, glutamate 151, asparagine 166, and asparagine 224. Aspartate 102 provides a ligand contact to Mg(2+). Mg(2+) is bound at residue asparagine 224. The linker stretch occupies residues 227-247 (IQLAALERAYQQQVAEELMLA). The interval 248 to 452 (GATLRDPARV…IDGWTRPVKK (205 aa)) is N-acetyltransferase. Residues arginine 330 and lysine 348 each coordinate UDP-N-acetyl-alpha-D-glucosamine. Histidine 360 serves as the catalytic Proton acceptor. Positions 363 and 374 each coordinate UDP-N-acetyl-alpha-D-glucosamine. Acetyl-CoA-binding positions include alanine 377, 383-384 (NY), serine 402, alanine 420, and arginine 437.

This sequence in the N-terminal section; belongs to the N-acetylglucosamine-1-phosphate uridyltransferase family. The protein in the C-terminal section; belongs to the transferase hexapeptide repeat family. Homotrimer. Requires Mg(2+) as cofactor.

It localises to the cytoplasm. The catalysed reaction is alpha-D-glucosamine 1-phosphate + acetyl-CoA = N-acetyl-alpha-D-glucosamine 1-phosphate + CoA + H(+). It catalyses the reaction N-acetyl-alpha-D-glucosamine 1-phosphate + UTP + H(+) = UDP-N-acetyl-alpha-D-glucosamine + diphosphate. It participates in nucleotide-sugar biosynthesis; UDP-N-acetyl-alpha-D-glucosamine biosynthesis; N-acetyl-alpha-D-glucosamine 1-phosphate from alpha-D-glucosamine 6-phosphate (route II): step 2/2. The protein operates within nucleotide-sugar biosynthesis; UDP-N-acetyl-alpha-D-glucosamine biosynthesis; UDP-N-acetyl-alpha-D-glucosamine from N-acetyl-alpha-D-glucosamine 1-phosphate: step 1/1. It functions in the pathway bacterial outer membrane biogenesis; LPS lipid A biosynthesis. Its function is as follows. Catalyzes the last two sequential reactions in the de novo biosynthetic pathway for UDP-N-acetylglucosamine (UDP-GlcNAc). The C-terminal domain catalyzes the transfer of acetyl group from acetyl coenzyme A to glucosamine-1-phosphate (GlcN-1-P) to produce N-acetylglucosamine-1-phosphate (GlcNAc-1-P), which is converted into UDP-GlcNAc by the transfer of uridine 5-monophosphate (from uridine 5-triphosphate), a reaction catalyzed by the N-terminal domain. This is Bifunctional protein GlmU from Hahella chejuensis (strain KCTC 2396).